The sequence spans 120 residues: Ribosome-binding factor A (120 aa).

Belongs to the RbfA family. Monomer. Binds 30S ribosomal subunits, but not 50S ribosomal subunits or 70S ribosomes.

It localises to the cytoplasm. Its function is as follows. One of several proteins that assist in the late maturation steps of the functional core of the 30S ribosomal subunit. Associates with free 30S ribosomal subunits (but not with 30S subunits that are part of 70S ribosomes or polysomes). Required for efficient processing of 16S rRNA. May interact with the 5'-terminal helix region of 16S rRNA. The polypeptide is Ribosome-binding factor A (Lactobacillus delbrueckii subsp. bulgaricus (strain ATCC 11842 / DSM 20081 / BCRC 10696 / JCM 1002 / NBRC 13953 / NCIMB 11778 / NCTC 12712 / WDCM 00102 / Lb 14)).